We begin with the raw amino-acid sequence, 516 residues long: Circadian clock oscillator protein KaiC (516 aa).

KaiC domains are found at residues 1–244 and 258–516; these read MNQP…INIF and ARIS…TLPE. 20 residues coordinate ATP: G46, T47, G48, K49, T50, L51, S86, K221, L222, R223, T225, H227, T237, T287, G288, T289, G290, K291, T292, and L293. Position 50 (T50) interacts with Mg(2+). T292 contributes to the Mg(2+) binding site. E315 is a binding site for Mg(2+). W328 provides a ligand contact to ATP. S428 carries the post-translational modification Phosphoserine; by autocatalysis. The residue at position 429 (T429) is a Phosphothreonine; by autocatalysis. 7 residues coordinate ATP: R448, K454, M455, R456, S458, H460, and K462.

This sequence belongs to the KaiC family. As to quaternary structure, homohexamer; hexamerization is dependent on ATP-binding. The KaiABC complex composition changes during the circadian cycle to control KaiC phosphorylation. Complexes KaiC(6), KaiA(2-4):KaiC(6), KaiB(6):KaiC(6) and KaiC(6):KaiB(6):KaiA(12) are among the most important forms, many form cooperatively. KaiC interacts with SasA, activating its autokinase function and leading to RpaA activation. Mg(2+) is required as a cofactor. Phosphorylated on serine and threonine residues by autocatalysis. Has a 4 step phosphorylation cycle; the autokinase acts first on Thr-429, then Ser-428. When Ser-428 is modified KaiC switches to an autophosphatase mode, acting first on phospho-Thr-429 then phospho-Ser-428.

It catalyses the reaction L-seryl-[protein] + ATP = O-phospho-L-seryl-[protein] + ADP + H(+). The catalysed reaction is L-threonyl-[protein] + ATP = O-phospho-L-threonyl-[protein] + ADP + H(+). The enzyme catalyses ATP + H2O = ADP + phosphate + H(+). The interaction with KaiA enhances its phosphorylation status, while the interaction with KaiB decreases it. In terms of biological role, central component of the KaiABC oscillator complex, which constitutes the main circadian regulator in cyanobacteria. Complex composition changes during the circadian cycle to control KaiC phosphorylation. KaiA stimulates KaiC autophosphorylation, while KaiB sequesters KaiA, leading to KaiC autodephosphorylation. Clock output pathways impact the RpaA transcriptional regulator. KaiC enhances the autophosphorylation activity of SasA, which then transfers its phosphate group to RpaA to activate it. KaiB and KaiC together enhance the phospho-RpaA dephosphatase activity of CikA. Its function is as follows. Has a weak, temperature-independent ATPase activity; ATPase activity defines the circadian period. The phosphorylation state of KaiC modulates its ATPase activity and effects KaiB binding. In Picosynechococcus sp. (strain ATCC 27264 / PCC 7002 / PR-6) (Agmenellum quadruplicatum), this protein is Circadian clock oscillator protein KaiC.